Here is a 139-residue protein sequence, read N- to C-terminus: Cystatin-11 (139 aa).

The first 28 residues, 1–28, serve as a signal peptide directing secretion; that stretch reads MMARLWKTTWFLLAILVALVAFSYQVKR. 2 disulfide bridges follow: C94-C102 and C115-C135. N134 is a glycosylation site (N-linked (GlcNAc...) asparagine).

Belongs to the cystatin family.

It is found in the secreted. Has antibacterial activity against the Gram-negative bacteria E.coli. May play a role in sperm maturation and fertilization. This is Cystatin-11 (Cst11) from Rattus norvegicus (Rat).